A 207-amino-acid chain; its full sequence is Ribosomal RNA small subunit methyltransferase G (207 aa).

S-adenosyl-L-methionine contacts are provided by residues G75, F80, 126-127, and R140; that span reads LE.

It belongs to the methyltransferase superfamily. RNA methyltransferase RsmG family.

The protein resides in the cytoplasm. It carries out the reaction guanosine(527) in 16S rRNA + S-adenosyl-L-methionine = N(7)-methylguanosine(527) in 16S rRNA + S-adenosyl-L-homocysteine. Functionally, specifically methylates the N7 position of guanine in position 527 of 16S rRNA. The protein is Ribosomal RNA small subunit methyltransferase G of Erythrobacter litoralis (strain HTCC2594).